The primary structure comprises 405 residues: Cytochrome P450 109 (405 aa).

Heme is bound at residue Cys-351.

The protein belongs to the cytochrome P450 family. Requires heme as cofactor.

Its function is as follows. Cytochromes P450 are a group of heme-thiolate monooxygenases. They oxidize a variety of structurally unrelated compounds, including steroids, fatty acids, and xenobiotics. In Bacillus spizizenii (strain ATCC 23059 / NRRL B-14472 / W23) (Bacillus subtilis subsp. spizizenii), this protein is Cytochrome P450 109 (cyp109).